Consider the following 283-residue polypeptide: ATP phosphoribosyltransferase (283 aa).

This sequence belongs to the ATP phosphoribosyltransferase family. Long subfamily. The cofactor is Mg(2+).

Its subcellular location is the cytoplasm. The enzyme catalyses 1-(5-phospho-beta-D-ribosyl)-ATP + diphosphate = 5-phospho-alpha-D-ribose 1-diphosphate + ATP. It participates in amino-acid biosynthesis; L-histidine biosynthesis; L-histidine from 5-phospho-alpha-D-ribose 1-diphosphate: step 1/9. Its activity is regulated as follows. Feedback inhibited by histidine. In terms of biological role, catalyzes the condensation of ATP and 5-phosphoribose 1-diphosphate to form N'-(5'-phosphoribosyl)-ATP (PR-ATP). Has a crucial role in the pathway because the rate of histidine biosynthesis seems to be controlled primarily by regulation of HisG enzymatic activity. The protein is ATP phosphoribosyltransferase of Parabacteroides distasonis (strain ATCC 8503 / DSM 20701 / CIP 104284 / JCM 5825 / NCTC 11152).